We begin with the raw amino-acid sequence, 295 residues long: Protein SSO2 (295 aa).

The Cytoplasmic segment spans residues 1-269 (MSNANPYENN…ARKARKNKIR (269 aa)). A phosphoserine mark is found at S31 and S34. Residues 39–100 (AFMNKINSIN…ATDLQYQLKA (62 aa)) are a coiled coil. The 63-residue stretch at 194–256 (LAEVQARHQE…EQGVGHTNKA (63 aa)) folds into the t-SNARE coiled-coil homology domain. A helical; Anchor for type IV membrane protein transmembrane segment spans residues 270 to 291 (CLIICFIIFAIVVVVVVVPSVV). Over 292–295 (ETRK) the chain is Extracellular.

The protein belongs to the syntaxin family.

The protein resides in the membrane. Functionally, required for vesicle fusion with the plasma membrane. The sequence is that of Protein SSO2 (SSO2) from Saccharomyces cerevisiae (strain ATCC 204508 / S288c) (Baker's yeast).